Reading from the N-terminus, the 425-residue chain is Glutamyl-tRNA reductase (425 aa).

Substrate-binding positions include Thr49–Arg52, Ser109, Glu114–Gln116, and Gln120. Catalysis depends on Cys50, which acts as the Nucleophile. An NADP(+)-binding site is contributed by Gly189 to Gly194.

It belongs to the glutamyl-tRNA reductase family. In terms of assembly, homodimer.

It catalyses the reaction (S)-4-amino-5-oxopentanoate + tRNA(Glu) + NADP(+) = L-glutamyl-tRNA(Glu) + NADPH + H(+). Its pathway is porphyrin-containing compound metabolism; protoporphyrin-IX biosynthesis; 5-aminolevulinate from L-glutamyl-tRNA(Glu): step 1/2. It participates in porphyrin-containing compound metabolism; chlorophyll biosynthesis. Functionally, catalyzes the NADPH-dependent reduction of glutamyl-tRNA(Glu) to glutamate 1-semialdehyde (GSA). In Pelodictyon phaeoclathratiforme (strain DSM 5477 / BU-1), this protein is Glutamyl-tRNA reductase.